Here is a 622-residue protein sequence, read N- to C-terminus: MKQSFEGFMKTAMEKKTLDFDNLTKPVFLTKAHRKELALKRCQDEIADRDRRSIVQISRSNSDNDDGNRPRDVKRERHRSHDHDRNRESDREFREREVKARVEKLEMVKREKEINAMKEQYLGTTKPKKRVIMKPSKNFRFDWENTEDTLSGEMNVLYQNPHEAQPLFGRGCRAGIDRREQKKLMTGKHEREKREEEDKHWSEKKLEEMNERDWRIFKEDFNISYRGSKIPHPMRNWEETIPLGLEQRDVIGISATGSGKTAAFVLPMLAYISRLPPMREENQTEGPYALVMVPTRELAHQIEEETVKFSRYLGFKAVSITGWESIEKQALKLSQGCEIVIATPGRLLDCLERRYVVLNQCNYLVLDEADRMIDMDFEPQVSEVLDVMPCSNLKPEKEDEELEEKKIYRTTYMFSATMLLSVERLARKFLRNPVVVTIGETTKFITQQVIMTKESDKFSRLKKLIDDLGDDKTAIVFVNTRNKVDYIVKNLEKVGRCRVTTLHAGKSQEQRDYSLEEFKKKRFNVLVTTDVLGRGLDILDLAQVINYDMPNTMDLYTHRIGRTGRAGKTGVATTFLTLEDKDVFYGLKQKLNECNSLVPPELARHEASKFKPGTFPDRFSHF.

Positions D50–E97 are disordered. Over residues D66 to E97 the composition is skewed to basic and acidic residues. Residues I241–V436 form the Helicase ATP-binding domain. S254–T261 contributes to the ATP binding site. The short motif at D367–D370 is the DEAD box element. Positions R460–E606 constitute a Helicase C-terminal domain.

Belongs to the DEAD box helicase family. DDX23/PRP28 subfamily.

It carries out the reaction ATP + H2O = ADP + phosphate + H(+). The polypeptide is Putative DEAD-box ATP-dependent RNA helicase 44 (RH44) (Arabidopsis thaliana (Mouse-ear cress)).